A 560-amino-acid polypeptide reads, in one-letter code: Hypermethylated in cancer 2 protein (560 aa).

Residues 24–87 (CDVIIVVENA…IYTGKLLSSD (64 aa)) enclose the BTB domain. Disordered stretches follow at residues 122–163 (RSLL…KTKR) and 183–367 (HCTT…GGRN). Polar residues-rich tracts occupy residues 126 to 153 (NKPTTPTNGRTSRNQRLSSTPVTPNQMS) and 183 to 203 (HCTTSNSLSPSTSKNGSNGSC). Residues 224–242 (EEVSPSSIPQESPQSASES) show a composition bias toward low complexity. Residues 243-259 (TANSASFDENPNTQNLT) are compositionally biased toward polar residues. Basic and acidic residues predominate over residues 296–308 (PKSEGKKGEDMER). The segment covering 348–362 (ENGQEQSEESGQSEN) has biased composition (low complexity). 5 consecutive C2H2-type zinc fingers follow at residues 387 to 409 (YVCIPCGKGFPSSEELNAHVETH), 450 to 472 (FSCSVCNKSYKDPATLRQHEKTH), 478 to 500 (FPCNICGKMFTQRGTMTRHMRSH), 506 to 528 (FACEECGMRFTRQYRLTEHMRVH), and 534 to 556 (YECQLCGGKFTQQRNLISHLRMH).

The protein belongs to the krueppel C2H2-type zinc-finger protein family. Hic subfamily.

The protein resides in the nucleus. In terms of biological role, transcriptional repressor. In Danio rerio (Zebrafish), this protein is Hypermethylated in cancer 2 protein (hic2).